We begin with the raw amino-acid sequence, 234 residues long: Peptidase E (234 aa).

Active-site charge relay system residues include serine 123, aspartate 138, and histidine 160.

It belongs to the peptidase S51 family.

It is found in the cytoplasm. The catalysed reaction is Dipeptidase E catalyzes the hydrolysis of dipeptides Asp-|-Xaa. It does not act on peptides with N-terminal Glu, Asn or Gln, nor does it cleave isoaspartyl peptides.. Its function is as follows. Hydrolyzes dipeptides containing N-terminal aspartate residues. May play a role in allowing the cell to use peptide aspartate to spare carbon otherwise required for the synthesis of the aspartate family of amino acids. This is Peptidase E from Actinobacillus pleuropneumoniae serotype 7 (strain AP76).